Consider the following 667-residue polypeptide: DNA ligase (667 aa).

Residues 32–36 (DKDYD) and 80–81 (SL) contribute to the NAD(+) site. Lysine 121 acts as the N6-AMP-lysine intermediate in catalysis. Residues arginine 143, glutamate 178, and lysine 314 each coordinate NAD(+). Zn(2+) contacts are provided by cysteine 407, cysteine 410, cysteine 423, and cysteine 429. The BRCT domain occupies 587–667 (IVESIFKDKT…EFEKMLGRES (81 aa)).

It belongs to the NAD-dependent DNA ligase family. LigA subfamily. The cofactor is Mg(2+). It depends on Mn(2+) as a cofactor.

The catalysed reaction is NAD(+) + (deoxyribonucleotide)n-3'-hydroxyl + 5'-phospho-(deoxyribonucleotide)m = (deoxyribonucleotide)n+m + AMP + beta-nicotinamide D-nucleotide.. In terms of biological role, DNA ligase that catalyzes the formation of phosphodiester linkages between 5'-phosphoryl and 3'-hydroxyl groups in double-stranded DNA using NAD as a coenzyme and as the energy source for the reaction. It is essential for DNA replication and repair of damaged DNA. This chain is DNA ligase, found in Clostridium botulinum (strain Alaska E43 / Type E3).